Reading from the N-terminus, the 35-residue chain is Cupiennin-2a (35 aa).

Lysine 35 is subject to Lysine amide.

As to expression, expressed by the venom gland.

It is found in the secreted. The chain is Cupiennin-2a from Cupiennius salei (American wandering spider).